A 486-amino-acid polypeptide reads, in one-letter code: Probable cytosol aminopeptidase (486 aa).

Mn(2+) contacts are provided by Lys-256 and Asp-261. The active site involves Lys-268. Positions 280, 339, and 341 each coordinate Mn(2+). Arg-343 is an active-site residue.

Belongs to the peptidase M17 family. Requires Mn(2+) as cofactor.

Its subcellular location is the cytoplasm. The enzyme catalyses Release of an N-terminal amino acid, Xaa-|-Yaa-, in which Xaa is preferably Leu, but may be other amino acids including Pro although not Arg or Lys, and Yaa may be Pro. Amino acid amides and methyl esters are also readily hydrolyzed, but rates on arylamides are exceedingly low.. The catalysed reaction is Release of an N-terminal amino acid, preferentially leucine, but not glutamic or aspartic acids.. In terms of biological role, presumably involved in the processing and regular turnover of intracellular proteins. Catalyzes the removal of unsubstituted N-terminal amino acids from various peptides. The sequence is that of Probable cytosol aminopeptidase from Synechococcus sp. (strain ATCC 27144 / PCC 6301 / SAUG 1402/1) (Anacystis nidulans).